The primary structure comprises 597 residues: MRTQYCGHLNKSLEGQTVELCGWVNRRRDLGGLIFIDMRDREGIVQVVVDPDMKDVFELANQLRNEFCIRLIGEVRVRPESQVNKKMATGEVEILATGLEIINRSDVLPLDFNQNNSEEQRLKFRYLDLRRPEMSDRIKLRAKASSFVRRFLDENAFLDIETPVLTKATPEGARDYLVPSRVHKGSFYALPQSPQLFKQLLMMSGFDRYYQIVKCFRDEDLRADRQPEFTQIDIETSFMSAEQVREITEKMITEMWKELLNVDLGTFPIMQFEEALRRFGSDKPDLRNPLELVDVADILKDVDFKVFSGPANDEKGRVAVIRVPGGASLSRKQIDEYTKFVGIYGAKGLAWMKVNDREAGFAGVQSPVAKFLNEDVVANLLDRTQAETGDIILFGADSKRVVTEALGALRLKLGEDLELTDKSIWKPLWVIDFPMFEEDGEGNLHAMHHPFTSPLGITAEELAVNPAAANSNAYDMVINGYEVGGGSVRIHNADMQSAVFNILGIEEGEQQSKFGFLLEALKYGTPPHAGLAFGLDRLVMLLCGTDNIRDVIAFPKTTAASCLLTNAPSLANPDSLKELSIAVAIAKKETAKEESAE.

Glu171 is a binding site for L-aspartate. An aspartate region spans residues 195 to 198 (QLFK). Arg217 contributes to the L-aspartate binding site. Residues 217 to 219 (RDE) and Gln226 contribute to the ATP site. An L-aspartate-binding site is contributed by His448. Glu482 contacts ATP. Arg489 contributes to the L-aspartate binding site. ATP is bound at residue 534–537 (GLDR).

It belongs to the class-II aminoacyl-tRNA synthetase family. Type 1 subfamily. As to quaternary structure, homodimer.

It localises to the cytoplasm. The catalysed reaction is tRNA(Asp) + L-aspartate + ATP = L-aspartyl-tRNA(Asp) + AMP + diphosphate. Catalyzes the attachment of L-aspartate to tRNA(Asp) in a two-step reaction: L-aspartate is first activated by ATP to form Asp-AMP and then transferred to the acceptor end of tRNA(Asp). This chain is Aspartate--tRNA ligase, found in Photobacterium profundum (strain SS9).